Here is a 370-residue protein sequence, read N- to C-terminus: MTIAAAPPSSRFRGVRIWLTLVAALIAVMVLVGGATRLTESGLSIVEWKPVTGSLPPLTETQWHTAFDGYKQIPQYRELNAGMTLDQFKTIFWWEWSHRLLGRVIGIVYLLPFLWFLWRGAIGPEWKRALWIIFALGALQGAVGWWMVASGLSQRTEVSQVRLATHLSLALIIYAAIVWTLRRMADRARVAAPARLKVTALALLGLTFVQLYAGALVAGLRAGRLYNTWPMIDGALIPDAARLWFESPWWKNLFDNHLTVQFDHRMLAYALWTLAALHMIDALRTRAGAAARGAVLLFLALTVQAALGIFTVLYAAPIDLALAHQAMALVVLTLAVLQAERLTATREDRTALGRGAAGRLAVPSELFPSA.

Helical transmembrane passes span 15–35 (VRIW…VGGA), 104–124 (VIGI…AIGP), 129–149 (ALWI…WMVA), 161–181 (VRLA…VWTL), 200–220 (ALAL…VAGL), 261–280 (QFDH…LHMI), 293–313 (GAVL…FTVL), and 317–337 (PIDL…LAVL). H264 provides a ligand contact to heme. Position 324 (H324) interacts with heme.

This sequence belongs to the COX15/CtaA family. Type 2 subfamily. In terms of assembly, interacts with CtaB. It depends on heme b as a cofactor.

It is found in the cell membrane. The enzyme catalyses Fe(II)-heme o + 2 A + H2O = Fe(II)-heme a + 2 AH2. The protein operates within porphyrin-containing compound metabolism; heme A biosynthesis; heme A from heme O: step 1/1. Its function is as follows. Catalyzes the conversion of heme O to heme A by two successive hydroxylations of the methyl group at C8. The first hydroxylation forms heme I, the second hydroxylation results in an unstable dihydroxymethyl group, which spontaneously dehydrates, resulting in the formyl group of heme A. This chain is Heme A synthase, found in Rhodopseudomonas palustris (strain TIE-1).